The following is a 513-amino-acid chain: ATP synthase subunit alpha (513 aa).

169-176 (GDRQTGKT) is a binding site for ATP.

The protein belongs to the ATPase alpha/beta chains family. In terms of assembly, F-type ATPases have 2 components, CF(1) - the catalytic core - and CF(0) - the membrane proton channel. CF(1) has five subunits: alpha(3), beta(3), gamma(1), delta(1), epsilon(1). CF(0) has three main subunits: a(1), b(2) and c(9-12). The alpha and beta chains form an alternating ring which encloses part of the gamma chain. CF(1) is attached to CF(0) by a central stalk formed by the gamma and epsilon chains, while a peripheral stalk is formed by the delta and b chains.

The protein resides in the cell inner membrane. It carries out the reaction ATP + H2O + 4 H(+)(in) = ADP + phosphate + 5 H(+)(out). Produces ATP from ADP in the presence of a proton gradient across the membrane. The alpha chain is a regulatory subunit. This chain is ATP synthase subunit alpha, found in Vibrio vulnificus (strain CMCP6).